The chain runs to 81 residues: uncharacterized protein (81 aa).

Residues 1–58 (MPQSKQQFKRQGARQRDSKGKFVKARTGMATAPPAAVSTAAPTASTMTPTGSSTTATI) are disordered. A compositionally biased stretch (low complexity) spans 30-58 (ATAPPAAVSTAAPTASTMTPTGSSTTATI).

This is an uncharacterized protein from Caenorhabditis elegans.